The sequence spans 23 residues: 48 kDa cell wall protein (23 aa).

The protein resides in the secreted. The protein localises to the cell wall. In Nicotiana tabacum (Common tobacco), this protein is 48 kDa cell wall protein.